The following is a 130-amino-acid chain: Protein ApaG (130 aa).

The 125-residue stretch at 3–127 (SEVTRSIRVT…FSLDSPHGRS (125 aa)) folds into the ApaG domain.

The chain is Protein ApaG from Rhodospirillum centenum (strain ATCC 51521 / SW).